The following is a 147-amino-acid chain: Large ribosomal subunit protein uL15 (147 aa).

Residues 1–46 (MSIRLENLSYTPGARKEKHRKGRGHAAGKGKQAGRGQSGQKKRSTV) are disordered. A compositionally biased stretch (basic residues) spans 16–28 (KEKHRKGRGHAAG).

Belongs to the universal ribosomal protein uL15 family. In terms of assembly, part of the 50S ribosomal subunit.

Functionally, binds to the 23S rRNA. The protein is Large ribosomal subunit protein uL15 of Mesomycoplasma hyopneumoniae (strain 232) (Mycoplasma hyopneumoniae).